The sequence spans 60 residues: Large ribosomal subunit protein uL30 (60 aa).

Belongs to the universal ribosomal protein uL30 family. In terms of assembly, part of the 50S ribosomal subunit.

This is Large ribosomal subunit protein uL30 from Aromatoleum aromaticum (strain DSM 19018 / LMG 30748 / EbN1) (Azoarcus sp. (strain EbN1)).